The following is a 146-amino-acid chain: MQVILLEPGKLGKTGDVVNVKDGYARNWLIPQGIASPATNSNMKSLEARVRSRQKIQAQEKAAAEDLASRLNGVAVELSVRAGEGKIYGAVTHQDVANSLDKLGFDVDKRRIEMPKTVKEIGEYDISYRAHPEVTIPMKLVVHAQK.

The protein belongs to the bacterial ribosomal protein bL9 family.

Binds to the 23S rRNA. In Deinococcus deserti (strain DSM 17065 / CIP 109153 / LMG 22923 / VCD115), this protein is Large ribosomal subunit protein bL9.